Here is a 286-residue protein sequence, read N- to C-terminus: Phosphatidylserine decarboxylase proenzyme (286 aa).

Active-site charge relay system; for autoendoproteolytic cleavage activity residues include aspartate 91, histidine 148, and serine 251. The active-site Schiff-base intermediate with substrate; via pyruvic acid; for decarboxylase activity is the serine 251. A Pyruvic acid (Ser); by autocatalysis modification is found at serine 251.

This sequence belongs to the phosphatidylserine decarboxylase family. PSD-B subfamily. Prokaryotic type I sub-subfamily. In terms of assembly, heterodimer of a large membrane-associated beta subunit and a small pyruvoyl-containing alpha subunit. Pyruvate serves as cofactor. Is synthesized initially as an inactive proenzyme. Formation of the active enzyme involves a self-maturation process in which the active site pyruvoyl group is generated from an internal serine residue via an autocatalytic post-translational modification. Two non-identical subunits are generated from the proenzyme in this reaction, and the pyruvate is formed at the N-terminus of the alpha chain, which is derived from the carboxyl end of the proenzyme. The autoendoproteolytic cleavage occurs by a canonical serine protease mechanism, in which the side chain hydroxyl group of the serine supplies its oxygen atom to form the C-terminus of the beta chain, while the remainder of the serine residue undergoes an oxidative deamination to produce ammonia and the pyruvoyl prosthetic group on the alpha chain. During this reaction, the Ser that is part of the protease active site of the proenzyme becomes the pyruvoyl prosthetic group, which constitutes an essential element of the active site of the mature decarboxylase.

It localises to the cell membrane. It carries out the reaction a 1,2-diacyl-sn-glycero-3-phospho-L-serine + H(+) = a 1,2-diacyl-sn-glycero-3-phosphoethanolamine + CO2. It participates in phospholipid metabolism; phosphatidylethanolamine biosynthesis; phosphatidylethanolamine from CDP-diacylglycerol: step 2/2. In terms of biological role, catalyzes the formation of phosphatidylethanolamine (PtdEtn) from phosphatidylserine (PtdSer). The sequence is that of Phosphatidylserine decarboxylase proenzyme from Marinobacter nauticus (strain ATCC 700491 / DSM 11845 / VT8) (Marinobacter aquaeolei).